A 358-amino-acid chain; its full sequence is Histidinol-phosphate aminotransferase (358 aa).

K218 bears the N6-(pyridoxal phosphate)lysine mark.

Belongs to the class-II pyridoxal-phosphate-dependent aminotransferase family. Histidinol-phosphate aminotransferase subfamily. In terms of assembly, homodimer. The cofactor is pyridoxal 5'-phosphate.

It catalyses the reaction L-histidinol phosphate + 2-oxoglutarate = 3-(imidazol-4-yl)-2-oxopropyl phosphate + L-glutamate. Its pathway is amino-acid biosynthesis; L-histidine biosynthesis; L-histidine from 5-phospho-alpha-D-ribose 1-diphosphate: step 7/9. This Dehalococcoides mccartyi (strain ATCC BAA-2266 / KCTC 15142 / 195) (Dehalococcoides ethenogenes (strain 195)) protein is Histidinol-phosphate aminotransferase.